We begin with the raw amino-acid sequence, 60 residues long: Large ribosomal subunit protein uL30 (60 aa).

This sequence belongs to the universal ribosomal protein uL30 family. As to quaternary structure, part of the 50S ribosomal subunit.

The protein is Large ribosomal subunit protein uL30 of Xanthobacter autotrophicus (strain ATCC BAA-1158 / Py2).